Consider the following 234-residue polypeptide: Large ribosomal subunit protein uL1 (234 aa).

Belongs to the universal ribosomal protein uL1 family. Part of the 50S ribosomal subunit.

In terms of biological role, binds directly to 23S rRNA. The L1 stalk is quite mobile in the ribosome, and is involved in E site tRNA release. Functionally, protein L1 is also a translational repressor protein, it controls the translation of the L11 operon by binding to its mRNA. The chain is Large ribosomal subunit protein uL1 from Bdellovibrio bacteriovorus (strain ATCC 15356 / DSM 50701 / NCIMB 9529 / HD100).